The following is a 385-amino-acid chain: Cotranscriptional regulator ARB2A homolog (385 aa).

Disordered stretches follow at residues 1–65 (MSDI…NGEE) and 220–239 (EEQKEKAKEEEEKKDDNGKL). The span at 52-62 (NNNNNNSNNSN) shows a compositional bias: low complexity. A compositionally biased stretch (basic and acidic residues) spans 220 to 238 (EEQKEKAKEEEEKKDDNGK).

This sequence belongs to the ARB2A family.

This is Cotranscriptional regulator ARB2A homolog from Dictyostelium discoideum (Social amoeba).